Reading from the N-terminus, the 425-residue chain is Stabilizer of axonemal microtubules 4 (425 aa).

Disordered stretches follow at residues 93–126 (PLEV…PPTK), 203–225 (EGSG…SQAL), and 316–335 (KEPT…PCDP). Positions 207 to 222 (FTKQSHQSPIVFQPPS) are enriched in polar residues.

In terms of assembly, microtubule inner protein component of sperm flagellar doublet microtubules. Interacts with PPP1CA.

The protein resides in the cell projection. The protein localises to the cilium. It is found in the cytoplasm. It localises to the cytoskeleton. Its subcellular location is the flagellum axoneme. This is Stabilizer of axonemal microtubules 4 from Homo sapiens (Human).